The primary structure comprises 1037 residues: MATESTPSEIIERERKKLLEILQHDPDSILDTLTSRRLISEEEYETLENVTDLLKKSRKLLILVQKKGEATCQHFLKCLFSTFPQSAAICGLRHEVLKHENTVPPQSMGASSNSEDAFSPGIKQPEAPEITVFFSEKEHLDLETSEFFRDKKTSYRETALSARKNEKEYDTPEVTLSYSVEKVGCEVPATITYIKDGQRYEELDDSLYLGKEEYLGSVDTPEDAEATVEEEVYDDPEHVGYDGEEDFENSETTEFSGEEPSYEGSETSLSLEEEQEKSIEERKKVFKDVLLCLNMDRSRKVLPDFVKQFSLDRGCKWTPESPGDLAWNFLMKVQARDVTARDSILSHKVLDEDSKEDLLAGVENLEIRDIQTINPLDVLCATMLCSDSSLQRQVMSNMYQCQFALPLLLPDAENNKSILMLGAMKDIVKKQSTQFSGGPTEDTEKFLTLMKMPVISFVRLGYCSFSKSRILNTLLSPAQLKLHKIFLHQDLPLLVLPRQISDGLVEITWCFPDSDDRKENPFFQKPVALANLRGNLESFWTQFGFLMEVSSAVFFFTDCLGEKEWDLLMFLGEAAIERCYFVLSSQARESEEAQIFQRILNLKPAQLLFWERGDAGDRRKNMEGLQAALQEVMFSSCLRCVSVEDMAALARELGIQVDEDFENTQRIQVSSGENMAGTAEGEGQQRHSQLKSSSKSQALMPIQEPGTQCELSQNLQNLYGTPVFRPVLENSWLFPTRIGGNFNHVSLKASWVMGRPFGSEQRPKWFHPLPFQNAGAQGRGKSFGIQSFHPQIFYSGERFMKFSRVARGCHSNGTFGRLPRPICQHVQACPERPQMMGTLERSRAVASKIGHSYSLDSQPARAVGKPWPQQACTRVTELTEATGKLIRTSHIGKPHPQSFQPAAATQKLRPASQQGVQMKTQGGASNPALQIGSHPMCKSSQFKSDQSNPSTVKHSQPKPFHSVPSQPKSSQTKSCQSQPSQTKPSPCKSTQPKPSQPWPPQSKPSQPRPPQPKSSSTNPSQAKAHHSKAGQKRGGKH.

N-acetylalanine is present on alanine 2. Positions 3-94 (TESTPSEIIE…QSAAICGLRH (92 aa)) constitute a CARD domain. The residue at position 154 (serine 154) is a Phosphoserine. Disordered regions lie at residues 235-270 (DPEHVGYDGEEDFENSETTEFSGEEPSYEGSETSLS), 669-704 (VSSGENMAGTAEGEGQQRHSQLKSSSKSQALMPIQE), and 887-1037 (RTSH…GGKH). The segment covering 242–261 (DGEEDFENSETTEFSGEEPS) has biased composition (acidic residues). Low complexity predominate over residues 690 to 699 (LKSSSKSQAL). Polar residues-rich tracts occupy residues 911–928 (ASQQGVQMKTQGGASNPA), 938–954 (KSSQFKSDQSNPSTVKH), and 963–984 (VPSQPKSSQTKSCQSQPSQTKP). Serine 985 bears the Phosphoserine mark. Positions 994–1012 (PSQPWPPQSKPSQPRPPQP) are enriched in pro residues. Positions 1023-1037 (KAHHSKAGQKRGGKH) are enriched in basic residues.

Its function is as follows. May be involved in apoptosis. The sequence is that of Caspase recruitment domain-containing protein 6 (CARD6) from Homo sapiens (Human).